A 205-amino-acid chain; its full sequence is uncharacterized protein (205 aa).

Residues 10–75 (QDLLSAVDQQ…AANLMTVMTD (66 aa)) adopt a coiled-coil conformation. A disordered region spans residues 108–141 (MPLPSSNTNNDQTSPPASGKTSETPKKNPTNAMF). Residues 111 to 141 (PSSNTNNDQTSPPASGKTSETPKKNPTNAMF) are compositionally biased toward polar residues.

The protein belongs to the asfivirus K205R family.

The protein localises to the host cytoplasm. Functionally, induces host endoplasmic reticulum stress and consequently activates autophagy and NF-kappa-B signaling pathway. In turn, may induce autophagy-mediated STING1 degradation and innate immune evasion. This is an uncharacterized protein from Ornithodoros (relapsing fever ticks).